A 498-amino-acid polypeptide reads, in one-letter code: MASQGTKRSYEQMETGGDRQNATEIRASVGRMVGGIGRFYIQMCTELKLSDYEGRLIQNSITIERMVLSAFDERRNRYLEEHPSAGKDPKKTGGPIYRRRNGKWVRELILYDKEEIRRIWRQANNGEDATAGLTHLMIWHSNLNDATYQRTRALVRTGMDPRMCSLMQGSTLPRRSGAAGAAVKGVGTMVMELIRMIKRGINDRNFWRGENGRRTRIAYERMCNILKGKFQTAAQRAMMDQVRESRNPGNAEIEDLIFLARSALILRGSVAHKSCLPACVYGLAVASGYDFEREGYSLVGIDPFRLLQNSQVFSLIRPNENPAHKSQLVWMACHSAAFEDLRVSSFIRGTRVVPRGQLSTRGVQIASNENMETMDSSTLELRSKYWAIRTRSGGNTNQQRASAGQISVQPTFSVQRNLPFERATIMAAFTGNTEGRTSDMRTEIIRMMESARPEDVSFQGRGVFELSDEKATNPIVPSFDMSNEGSYFFGDNAEEYDN.

The Unconventional nuclear localization signal motif lies at Met1–Asp18. The interval Met1 to Asn21 is disordered. Positions Lys198–Arg216 match the Bipartite nuclear localization signal motif.

The protein belongs to the influenza viruses nucleoprotein family. As to quaternary structure, homomultimerizes to form the nucleocapsid. May bind host exportin-1/XPO1. Binds to viral genomic RNA. Protein-RNA contacts are mediated by a combination of electrostatic interactions between positively charged residues and the phosphate backbone and planar interactions between aromatic side chains and bases. Late in virus-infected cells, may be cleaved from a 56-kDa protein to a 53-kDa protein by a cellular caspase. This cleavage might be a marker for the onset of apoptosis in infected cells or have a specific function in virus host interaction.

It is found in the virion. The protein localises to the host nucleus. In terms of biological role, encapsidates the negative strand viral RNA, protecting it from nucleases. The encapsidated genomic RNA is termed the ribonucleoprotein (RNP) and serves as template for transcription and replication. The RNP needs to be localized in the host nucleus to start an infectious cycle, but is too large to diffuse through the nuclear pore complex. NP comprises at least 2 nuclear localization signals that are responsible for the active RNP import into the nucleus through cellular importin alpha/beta pathway. Later in the infection, nclear export of RNPs are mediated through viral proteins NEP interacting with M1 which binds nucleoproteins. It is possible that nucleoprotein binds directly host exportin-1/XPO1 and plays an active role in RNPs nuclear export. M1 interaction with RNP seems to hide nucleoprotein's nuclear localization signals. Soon after a virion infects a new cell, M1 dissociates from the RNP under acidification of the virion driven by M2 protein. Dissociation of M1 from RNP unmasks nucleoprotein's nuclear localization signals, targeting the RNP to the nucleus. This Influenza A virus (strain A/Chicken/Scotland/1959 H5N1) protein is Nucleoprotein.